Reading from the N-terminus, the 1034-residue chain is Glycine dehydrogenase (decarboxylating), mitochondrial (1034 aa).

The N-terminal 63 residues, 1-63, are a transit peptide targeting the mitochondrion; that stretch reads MERARRLAML…LNGFGSQVRT (63 aa). An N6-(pyridoxal phosphate)lysine modification is found at Lys770.

Belongs to the GcvP family. As to quaternary structure, homodimer. The glycine cleavage system is composed of four proteins: P, T, L and H. It depends on pyridoxal 5'-phosphate as a cofactor.

It is found in the mitochondrion. It catalyses the reaction N(6)-[(R)-lipoyl]-L-lysyl-[glycine-cleavage complex H protein] + glycine + H(+) = N(6)-[(R)-S(8)-aminomethyldihydrolipoyl]-L-lysyl-[glycine-cleavage complex H protein] + CO2. Its function is as follows. The glycine cleavage system catalyzes the degradation of glycine. The P protein binds the alpha-amino group of glycine through its pyridoxal phosphate cofactor; CO(2) is released and the remaining methylamine moiety is then transferred to the lipoamide cofactor of the H protein. The sequence is that of Glycine dehydrogenase (decarboxylating), mitochondrial (GDCSP) from Flaveria anomala (Yellowtops).